Here is a 213-residue protein sequence, read N- to C-terminus: Adenylate kinase (213 aa).

ATP is bound at residue 10–15; the sequence is GAGKGT. Positions 30-59 are NMP; the sequence is STGNLLRDEVKSKTDLGVDIEKLISNGKFV. Residues Thr31, Arg36, 57–59, 85–88, and Gln92 each bind AMP; these read KFV and GYPR. Residues 126–162 form an LID region; it reads GRMTCEKCNMTLNEYFNKEQIELHPCGVEHLKKRKDD. Residue Arg127 coordinates ATP. AMP contacts are provided by Arg159 and Arg170. Gly198 provides a ligand contact to ATP.

Belongs to the adenylate kinase family. As to quaternary structure, monomer.

It localises to the cytoplasm. The enzyme catalyses AMP + ATP = 2 ADP. The protein operates within purine metabolism; AMP biosynthesis via salvage pathway; AMP from ADP: step 1/1. Functionally, catalyzes the reversible transfer of the terminal phosphate group between ATP and AMP. Plays an important role in cellular energy homeostasis and in adenine nucleotide metabolism. This is Adenylate kinase from Pelagibacter ubique (strain HTCC1062).